We begin with the raw amino-acid sequence, 465 residues long: Glutamate--tRNA ligase (465 aa).

Residues 11–21 (PSPTGFIHLGN) carry the 'HIGH' region motif. A compositionally biased stretch (basic and acidic residues) spans 120–131 (KPRYDGTWRPEP). Residues 120-139 (KPRYDGTWRPEPGKVLPTPP) form a disordered region. Positions 243-247 (KMSKR) match the 'KMSKS' region motif. Lys-246 lines the ATP pocket.

This sequence belongs to the class-I aminoacyl-tRNA synthetase family. Glutamate--tRNA ligase type 1 subfamily. Monomer.

The protein localises to the cytoplasm. It catalyses the reaction tRNA(Glu) + L-glutamate + ATP = L-glutamyl-tRNA(Glu) + AMP + diphosphate. Functionally, catalyzes the attachment of glutamate to tRNA(Glu) in a two-step reaction: glutamate is first activated by ATP to form Glu-AMP and then transferred to the acceptor end of tRNA(Glu). The protein is Glutamate--tRNA ligase of Ralstonia nicotianae (strain ATCC BAA-1114 / GMI1000) (Ralstonia solanacearum).